The chain runs to 447 residues: Putative branched-chain amino acid carrier protein SE_1090 (447 aa).

A run of 12 helical transmembrane segments spans residues 5 to 25, 40 to 60, 74 to 94, 114 to 134, 143 to 163, 193 to 213, 229 to 249, 290 to 310, 317 to 337, 350 to 370, 382 to 402, and 417 to 437; these read TWII…LIFP, ILAF…VGAL, PRFS…LFAI, GNLA…YLCL, IGSL…IKGF, GYLT…VNAI, IIAG…LGYI, LLGI…IVSV, ILPK…SFIL, VPVL…ILIA, IPLI…QGWI, and LEWF…SYFV.

The protein belongs to the branched chain amino acid transporter family.

The protein resides in the cell membrane. Its function is as follows. Component of the transport system for branched-chain amino acids (leucine, isoleucine and valine), which is coupled to a proton motive force. The sequence is that of Putative branched-chain amino acid carrier protein SE_1090 from Staphylococcus epidermidis (strain ATCC 12228 / FDA PCI 1200).